The following is an 801-amino-acid chain: Leucine--tRNA ligase (801 aa).

The short motif at 39–50 (PYPSGAGIHVGH) is the 'HIGH' region element. A 'KMSKS' region motif is present at residues 578–582 (KMSKS). K581 contacts ATP.

Belongs to the class-I aminoacyl-tRNA synthetase family.

Its subcellular location is the cytoplasm. The catalysed reaction is tRNA(Leu) + L-leucine + ATP = L-leucyl-tRNA(Leu) + AMP + diphosphate. The chain is Leucine--tRNA ligase from Mesoplasma florum (strain ATCC 33453 / NBRC 100688 / NCTC 11704 / L1) (Acholeplasma florum).